Consider the following 612-residue polypeptide: Dihydroxy-acid dehydratase (612 aa).

Residue Asp-81 participates in Mg(2+) binding. Cys-122 provides a ligand contact to [2Fe-2S] cluster. Mg(2+) contacts are provided by Asp-123 and Lys-124. Position 124 is an N6-carboxylysine (Lys-124). Cys-195 contributes to the [2Fe-2S] cluster binding site. Residue Glu-491 coordinates Mg(2+). Ser-517 acts as the Proton acceptor in catalysis.

It belongs to the IlvD/Edd family. Homodimer. The cofactor is [2Fe-2S] cluster. Requires Mg(2+) as cofactor.

It catalyses the reaction (2R)-2,3-dihydroxy-3-methylbutanoate = 3-methyl-2-oxobutanoate + H2O. It carries out the reaction (2R,3R)-2,3-dihydroxy-3-methylpentanoate = (S)-3-methyl-2-oxopentanoate + H2O. The protein operates within amino-acid biosynthesis; L-isoleucine biosynthesis; L-isoleucine from 2-oxobutanoate: step 3/4. Its pathway is amino-acid biosynthesis; L-valine biosynthesis; L-valine from pyruvate: step 3/4. In terms of biological role, functions in the biosynthesis of branched-chain amino acids. Catalyzes the dehydration of (2R,3R)-2,3-dihydroxy-3-methylpentanoate (2,3-dihydroxy-3-methylvalerate) into 2-oxo-3-methylpentanoate (2-oxo-3-methylvalerate) and of (2R)-2,3-dihydroxy-3-methylbutanoate (2,3-dihydroxyisovalerate) into 2-oxo-3-methylbutanoate (2-oxoisovalerate), the penultimate precursor to L-isoleucine and L-valine, respectively. This Rhizobium leguminosarum bv. trifolii (strain WSM2304) protein is Dihydroxy-acid dehydratase.